Consider the following 235-residue polypeptide: Aspartate/glutamate leucyltransferase (235 aa).

This sequence belongs to the R-transferase family. Bpt subfamily.

The protein resides in the cytoplasm. The enzyme catalyses N-terminal L-glutamyl-[protein] + L-leucyl-tRNA(Leu) = N-terminal L-leucyl-L-glutamyl-[protein] + tRNA(Leu) + H(+). The catalysed reaction is N-terminal L-aspartyl-[protein] + L-leucyl-tRNA(Leu) = N-terminal L-leucyl-L-aspartyl-[protein] + tRNA(Leu) + H(+). Functions in the N-end rule pathway of protein degradation where it conjugates Leu from its aminoacyl-tRNA to the N-termini of proteins containing an N-terminal aspartate or glutamate. The polypeptide is Aspartate/glutamate leucyltransferase (Pseudomonas putida (strain W619)).